Here is a 409-residue protein sequence, read N- to C-terminus: Pectin acetylesterase 4 (409 aa).

A signal peptide spans 1 to 32 (MVIRSLLQCRTWSKSDWLLASIGIVLIVYSFS). Asn36 and Asn163 each carry an N-linked (GlcNAc...) asparagine glycan. Active-site charge relay system residues include Ser199, Asp295, and His362. N-linked (GlcNAc...) asparagine glycans are attached at residues Asn379 and Asn406.

This sequence belongs to the pectinacetylesterase family.

It localises to the secreted. It is found in the cell wall. Its function is as follows. Hydrolyzes acetyl esters in homogalacturonan regions of pectin. In type I primary cell wall, galacturonic acid residues of pectin can be acetylated at the O-2 and O-3 positions. Decreasing the degree of acetylation of pectin gels in vitro alters their physical properties. This Arabidopsis thaliana (Mouse-ear cress) protein is Pectin acetylesterase 4.